Reading from the N-terminus, the 177-residue chain is Sec-independent protein translocase protein TatB (177 aa).

Residues 1–21 (MFDFAWSEIAVIGVVALVVIG) traverse the membrane as a helical segment. Residues 136 to 146 (REKTVSSETAR) show a composition bias toward basic and acidic residues. Residues 136–177 (REKTVSSETARRAATAPAFIPPGEAFRSARRAPAFIPPADQG) are disordered.

This sequence belongs to the TatB family. As to quaternary structure, the Tat system comprises two distinct complexes: a TatABC complex, containing multiple copies of TatA, TatB and TatC subunits, and a separate TatA complex, containing only TatA subunits. Substrates initially bind to the TatABC complex, which probably triggers association of the separate TatA complex to form the active translocon.

The protein localises to the cell inner membrane. Its function is as follows. Part of the twin-arginine translocation (Tat) system that transports large folded proteins containing a characteristic twin-arginine motif in their signal peptide across membranes. Together with TatC, TatB is part of a receptor directly interacting with Tat signal peptides. TatB may form an oligomeric binding site that transiently accommodates folded Tat precursor proteins before their translocation. This Granulibacter bethesdensis (strain ATCC BAA-1260 / CGDNIH1) protein is Sec-independent protein translocase protein TatB.